We begin with the raw amino-acid sequence, 322 residues long: NADH-quinone oxidoreductase subunit H (322 aa).

The next 8 membrane-spanning stretches (helical) occupy residues 12-32 (IGKA…MSFI), 79-99 (IFVL…AVVP), 111-131 (VGLL…LFAG), 151-171 (LSYE…TGSF), 183-203 (LWNV…GVAV), 234-254 (FFVG…TLFF), 262-282 (LPPF…FILL), and 301-321 (VCLP…LMNA).

The protein belongs to the complex I subunit 1 family. NDH-1 is composed of 14 different subunits. Subunits NuoA, H, J, K, L, M, N constitute the membrane sector of the complex.

Its subcellular location is the cell inner membrane. The catalysed reaction is a quinone + NADH + 5 H(+)(in) = a quinol + NAD(+) + 4 H(+)(out). Its function is as follows. NDH-1 shuttles electrons from NADH, via FMN and iron-sulfur (Fe-S) centers, to quinones in the respiratory chain. The immediate electron acceptor for the enzyme in this species is believed to be ubiquinone. Couples the redox reaction to proton translocation (for every two electrons transferred, four hydrogen ions are translocated across the cytoplasmic membrane), and thus conserves the redox energy in a proton gradient. This subunit may bind ubiquinone. This chain is NADH-quinone oxidoreductase subunit H, found in Aeromonas hydrophila subsp. hydrophila (strain ATCC 7966 / DSM 30187 / BCRC 13018 / CCUG 14551 / JCM 1027 / KCTC 2358 / NCIMB 9240 / NCTC 8049).